The following is a 235-amino-acid chain: MOB kinase activator 2 (235 aa).

The segment at 1 to 22 is disordered; sequence MDWLMGKSKAKPNGKKPAAEEK. 4 residues coordinate Zn(2+): C78, C83, H157, and H162. Residues 213-235 form a disordered region; it reads NSGATGDGANSGASGAQNHVKER.

The protein belongs to the MOB1/phocein family. In terms of assembly, binds STK38 and STK38L. Post-translationally, phosphorylated.

The protein resides in the nucleus. It localises to the cytoplasm. The protein localises to the perinuclear region. Its function is as follows. Stimulates the autophosphorylation and kinase activity of STK38 and STK38L. The chain is MOB kinase activator 2 (Mob2) from Mus musculus (Mouse).